Reading from the N-terminus, the 142-residue chain is ATP synthase epsilon chain (142 aa).

It belongs to the ATPase epsilon chain family. In terms of assembly, F-type ATPases have 2 components, CF(1) - the catalytic core - and CF(0) - the membrane proton channel. CF(1) has five subunits: alpha(3), beta(3), gamma(1), delta(1), epsilon(1). CF(0) has three main subunits: a, b and c.

The protein localises to the cell inner membrane. Its function is as follows. Produces ATP from ADP in the presence of a proton gradient across the membrane. The sequence is that of ATP synthase epsilon chain from Shewanella loihica (strain ATCC BAA-1088 / PV-4).